The chain runs to 767 residues: V-set and immunoglobulin domain-containing protein 10-like 2 (767 aa).

The signal sequence occupies residues 1–28 (MVGQRAQHSPVSLLLLIHLCLLHLRASG). 3 consecutive Ig-like domains span residues 34–140 (PEAP…SHLT), 150–234 (PQVR…AFLD), and 242–324 (PVIT…TTVQ). Cystine bridges form between Cys-56-Cys-122, Cys-169-Cys-217, and Cys-268-Cys-308. N-linked (GlcNAc...) asparagine glycosylation is present at Asn-376. Ig-like domains are found at residues 399–499 (PALA…LQLE) and 501–593 (PQLD…VLLE). Intrachain disulfides connect Cys-435/Cys-481 and Cys-522/Cys-577. The 101-residue stretch at 599–699 (APPNVTISRL…EVKIPADPPF (101 aa)) folds into the Fibronectin type-III domain. N-linked (GlcNAc...) asparagine glycosylation is found at Asn-602 and Asn-628. Residues 704–724 (AVLGAAGTGMVVATVASLLVF) traverse the membrane as a helical segment. Positions 735–754 (PRLETPTTTPGLDPAQETTD) are disordered. Residues 739–754 (TPTTTPGLDPAQETTD) show a composition bias toward polar residues.

The protein resides in the membrane. This chain is V-set and immunoglobulin domain-containing protein 10-like 2, found in Homo sapiens (Human).